Consider the following 462-residue polypeptide: Microspherule protein 1 (462 aa).

M1 is subject to N-acetylmethionine. The interval 1 to 130 (MDKDSQGLLD…KSKQPLQVTK (130 aa)) is disordered. S22 carries the post-translational modification Phosphoserine. Positions 43 to 55 (PKRRSSSRFIKRK) are enriched in basic residues. Phosphoserine is present on S102. T103 carries the phosphothreonine modification. Residues 103–112 (TPVPPSPAPA) show a composition bias toward pro residues. A Phosphoserine modification is found at S108. The Nuclear localization signal motif lies at 113–123 (PGLTKRVKKSK). K123 and K130 each carry N6-acetyllysine. S282 bears the Phosphoserine mark. Positions 301–335 (LEHELMVADRRQKREIRQLEQELHKWQVLVDSITG) form a coiled coil. Positions 363-419 (ITLGRATKDNQIDVDLSLEGPAWKISRKQGVIKLKNNGDFFIANEGRRPIYIDGRPV) constitute an FHA domain. The UBR5-degron motif lies at 389–396 (RKQGVIKL).

In terms of assembly, component of the chromatin remodeling INO80 complex; specifically part of a complex module associated with the N-terminus of INO80. Component of some MLL1/MLL complex, at least composed of the core components KMT2A/MLL1, ASH2L, HCFC1, WDR5 and RBBP5, as well as the facultative components BACC1, CHD8, E2F6, HSP70, INO80C, KANSL1, LAS1L, MAX, MCRS1, MGA, KAT8/MOF, PELP1, PHF20, PRP31, RING2, RUVB1/TIP49A, RUVB2/TIP49B, SENP3, TAF1, TAF4, TAF6, TAF7, TAF9 and TEX10. Component of the NSL complex at least composed of MOF/KAT8, KANSL1, KANSL2, KANSL3, MCRS1, PHF20, OGT1/OGT, WDR5 and HCFC1. Interacts with NOP2. Interacts with PINX1. Interacts with TERT. Interacts with CCDC85B. Interacts with DAXX. Interacts (via N-terminus) with FMR1 (via phosphorylated form). Interacts with FXR1 and FXR2. Interacts (via C-terminus) with NDE1 (via C-terminus); phosphorylation of NDE1 inhibits the interaction. Interacts (via C-terminus) with ZNF375. Interacts (via C-terminus) with active GTP-bound RHEB (via N-terminus) under conditions of high amino acid concentration; the interaction promotes mTORC1 complex activation by RHEB. Interacts (via N-terminus) with the mTORC1 complex; the interaction ensures mTORC1 activation by RHEB. Interacts with DYNC1I1; the interaction is required for the proper distribution of centriolar satellites. Interacts with TTBK2; the interaction is required for recruitment of TTBK2 to the mother centriole. Interacts with KIF2A; the interaction occurs during mitosis and facilitates chromosome alignment. As to quaternary structure, (Microbial infection) Interacts with Herpes simplex virus ICP22. In terms of processing, ubiquitinated by UBR5 when not assembled in the INO80 complex, leading to its degradation: UBR5 recognizes and binds a degron that is not accessible when MCRS1 is part of the INO80 complex. Post-translationally, phosphorylated by AURKA on Ser-35 and/or Ser-36 during mitosis which is required for kinetochore fiber assembly and mitotic progression but not for spindle localization or for chromosome-induced microtuble aster formation. Also phosphorylated by AURKA on Ser-85 and/or Ser-87. Phosphorylated by TTK/MPS1 which enhances recruitment of KIF2A to the minus end of spindle microtubules and facilitates precise chromosome segregation. Detected in testis, and at lower levels in spleen, thymus, prostate, uterus, small intestine, colon and leukocytes.

Its subcellular location is the nucleus. It localises to the nucleolus. The protein resides in the cytoplasm. It is found in the cytoskeleton. The protein localises to the microtubule organizing center. Its subcellular location is the centrosome. It localises to the spindle pole. The protein resides in the chromosome. It is found in the centromere. The protein localises to the kinetochore. Its subcellular location is the lysosome. It localises to the centriolar satellite. In terms of biological role, modulates the transcription repressor activity of DAXX by recruiting it to the nucleolus. As part of the NSL complex, may be involved in acetylation of nucleosomal histone H4 on several lysine residues. Putative regulatory component of the chromatin remodeling INO80 complex which is involved in transcriptional regulation, DNA replication and probably DNA repair. May also be an inhibitor of TERT telomerase activity. Binds to G-quadruplex structures in mRNA. Binds to RNA homomer poly(G) and poly(U). Maintains RHEB at the lysosome in its active GTP-bound form and prevents its interaction with the mTORC1 complex inhibitor TSC2, ensuring activation of the mTORC1 complex by RHEB. Stabilizes the minus ends of kinetochore fibers by protecting them from depolymerization, ensuring functional spindle assembly during mitosis. Following phosphorylation by TTK/MPS1, enhances recruitment of KIF2A to the minus ends of mitotic spindle microtubules which promotes chromosome alignment. Regulates the morphology of microtubule minus ends in mitotic spindle by maintaining them in a closed conformation characterized by the presence of an electron-dense cap. Regulates G2/M transition and spindle assembly during oocyte meiosis. Mediates histone modifications and transcriptional regulation in germinal vesicle oocytes which are required for meiotic progression. Also regulates microtubule nucleation and spindle assembly by activating aurora kinases during oocyte meiosis. Contributes to the establishment of centriolar satellites and also plays a role in primary cilium formation by recruiting TTBK2 to the mother centriole which is necessary for removal of the CP110 cap from the mother centriole, an early step in ciliogenesis. Required for epiblast development during early embryogenesis. Essential for cell viability. This chain is Microspherule protein 1 (MCRS1), found in Homo sapiens (Human).